The chain runs to 560 residues: Nibrin homolog (560 aa).

In terms of domain architecture, FHA spans 25–87 (YKVGRKDCDV…YGTFFNKVQG (63 aa)). The 76-residue stretch at 115-190 (TFRLSFVPIV…KQIVLGDWFK (76 aa)) folds into the BRCT domain. A Nuclear localization signal motif is present at residues 511–518 (YKRGTVID).

Belongs to the Nibrin family. In terms of assembly, component of the MRN complex composed of two heterodimers RAD50 and MRE11 associated with a single NBS1.

The protein resides in the nucleus. Its subcellular location is the chromosome. Component of the MRN complex, which plays a central role in double-strand break (DSB) repair, DNA recombination, maintenance of telomere integrity and meiosis. The MRN complex is involved in the repair of DNA double-strand breaks (DSBs) via homologous recombination (HR), an error-free mechanism which primarily occurs during S and G2 phases. The complex (1) mediates the end resection of damaged DNA, which generates proper single-stranded DNA, a key initial steps in HR, and is (2) required for the recruitment of other repair factors and efficient activation of ATM and ATR upon DNA damage. The MRN complex possesses single-strand endonuclease activity and double-strand-specific 3'-5' exonuclease activity, which are provided by MRE11, to initiate end resection, which is required for single-strand invasion and recombination. Within the MRN complex, NBS1 acts as a protein-protein adapter, which specifically recognizes and binds phosphorylated proteins, promoting their recruitment to DNA damage sites. Recruits MRE11 and RAD50 components of the MRN complex to DSBs in response to DNA damage. The protein is Nibrin homolog of Oryza sativa subsp. indica (Rice).